Here is a 391-residue protein sequence, read N- to C-terminus: Elongation factor Tu (391 aa).

In terms of domain architecture, tr-type G spans 10–201; sequence KPHVNIGTIG…AVDEFIPTPE (192 aa). The G1 stretch occupies residues 19-26; it reads GHVDHGKT. 19 to 26 is a GTP binding site; that stretch reads GHVDHGKT. Residue T26 participates in Mg(2+) binding. Positions 55–59 are G2; sequence GITIS. The tract at residues 76–79 is G3; sequence DCPG. Residues 76–80 and 131–134 each bind GTP; these read DCPGH and NKVD. Residues 131 to 134 are G4; that stretch reads NKVD. Positions 169–171 are G5; sequence SAL.

Belongs to the TRAFAC class translation factor GTPase superfamily. Classic translation factor GTPase family. EF-Tu/EF-1A subfamily. Monomer.

The protein resides in the cytoplasm. It catalyses the reaction GTP + H2O = GDP + phosphate + H(+). Its function is as follows. GTP hydrolase that promotes the GTP-dependent binding of aminoacyl-tRNA to the A-site of ribosomes during protein biosynthesis. This Roseobacter denitrificans (strain ATCC 33942 / OCh 114) (Erythrobacter sp. (strain OCh 114)) protein is Elongation factor Tu.